The following is a 150-amino-acid chain: Galactose-binding lectin (150 aa).

Positions 16 and 19 each coordinate D-galactose. Asparagine 26 carries an N-linked (GlcNAc...) asparagine glycan. D-galactose is bound by residues asparagine 27, 35-37 (DIH), histidine 64, and glycine 67. Residue asparagine 74 is glycosylated (N-linked (GlcNAc...) asparagine). D-galactose-binding positions include glutamate 75, 83 to 85 (DRH), histidine 108, and glycine 111. Asparagine 118 carries an N-linked (GlcNAc...) asparagine glycan. Residues asparagine 119 and 127–129 (DKH) contribute to the D-galactose site.

As to quaternary structure, monomer in solution. Homodimer in solution. Exists as a monomer in solution when a low concentration (0.001 mg/ml) of it is present. Homodimers start to appear at a concentration of 0.01 mg/ml and tetramers at a concentration of 0.1 mg/ml. As to expression, highly expressed in mantle and to a lesser extent in muscle, hepatopancreas, gill and hemocytes.

With respect to regulation, bacterial binding activity is inhibited by D-galactose. Hemagglutinating activity is independent of divalent cations Ca2(+) or Mg2(+). It is strongly inhibited by N-acetyl-D-galactosamine (GalNAc), D-galactose and D-talose, and to a lesser extent by melibiose and raffinose. Also inhibited by glycoprotein asialo-bovine submaxillary mucin (BSM). Not inhibited by D-glucose, D-fucose, D-galactitol, N-acetyl-D-glucosamine or lactose. Fungal binding activity is inhibited by D-galactose. Cytotoxic activity against Raji cell line is completely inhibited by galactose, melibiose and raffinose, but not by glucose or lactose. Galactose inhibits binding to laminin and BSM, but not to collagen, gelatin or fibronectin. Galactose-binding lectin. Binds both alpha and beta anomer of galactose (Gal), but has a stronger interaction with the glycans having alpha Gal at the non-reducing end and binds beta Gal weakly only in highly branched glycans. Has high affinity to Galalpha1-4Galbeta1-4GlcNAc. Binds N-acetyl-2-deoxy-2-amino-galactose (2-deoxy-GalNAc). Binds N-acetylgalactosamine (GalNAc). Binds porcine stomach mucin (PSM) with high affinity. Binds galactosamine. Binds laminin, bovine submaxillary mucin (BSM), fibronectin, type I collagen and gelatin with a decreasing affinity, respectively. Has hemagglutinating activity towards human type A erythrocytes. Also hemagglutinates human type 0, B and AB erythrocytes as well as rabbit and mouse erythrocytes. Agglutinates both Gram-positive and Gram-negative bacteria including B.subtilis ATCC 6633, S.aureus ATCC 21027 and E.coli 3254, respectively. No agglutination activity towards Gram-positive S.amurskyense CMM 3673. Has bacteriostatic activity on S.amurskyense CMM 3673, B.subtilis ATCC 6633, S.aureus ATCC 21027 and E.coli 3254. However, has no agglutination nor bacteriostatic activity on Gram-negative C.scophthalmum CIP 104199 or A.troitsensis KMM 3674. Inhibits growth of fungi from the genera Aspergillus, Penicillium, Trichoderma and st. Mycelia. Inhibits germination of spores and hyphal growth of them. Has dose-dependent cytotoxic effect on the human globotriaosylceramide (Gb3)-expressing Burkitt's lymphoma (Raji) cell line. Binds to Gb3 in these cells leading to activation of caspase-9/3 and PARP. Has dose-dependent cytotoxic effect on the Gb3-expressing human MCF-7 breast cancer cell line. No cytotoxic effect on myelogenous leukemia K562 cell line, which does not express Gb3. Activates immune responses in mice and increases cytokine production of TNF-alpha, IL-6 and MCP-1 in the serum and the peritoneal lavage of mice. Induces TNF-alpha and IL-6 secretion in mouse RAW264.7 macrophages, mouse bone marrow-derived macrophages, human THP-1 macrophages, human peripheral blood mononuclear cells (PBMCs) and human blood monocyte-derived macrophages. TNF-alpha production in macrophages could not be inhibited by GalNAc, GalN or Gal, indicating that induced cytokine production is separate from its sugar binding activity. Increases intracellular reactive oxygen species levels, expression and phosphorylation of protein kinases PKC alpha/delta, expression of COX-2 and NF-kappaB, and activates the MAPK pathway by increasing the phosphorylation of ERK1/2, JNK1/2 and p38 in mouse RAW264.7 macrophages. Induces endotoxin tolerance in lipopolysaccharide(LPS)-activated macrophages by down-regulating IRAK2 expression, reducing JNK1/2 phosphorylation and NF-kappaB activation. Can slightly increase the bactericidal activity of RAW264.7 macrophages. Has DNA-binding activity. Recognizes pathogen-associated molecular patterns (PAMPs) and binds to LPS from E.coli, but has only little binding to beta-1,3-glucan from E.gracilis and peptidoglycan from S.aureus. Activates secretion of TNF-alpha and IFN-gamma by the human peripheral blood cells (HPBCs). May be involved in innate immunity acting as an antibacterial and antifungal agent involved in the recognition and clearance of pathogens. The sequence is that of Galactose-binding lectin from Crenomytilus grayanus (Gray mussel).